We begin with the raw amino-acid sequence, 282 residues long: Shikimate dehydrogenase (NADP(+)) (282 aa).

Shikimate is bound by residues 15–17 and threonine 62; that span reads SKS. The active-site Proton acceptor is the lysine 66. Residues asparagine 87 and aspartate 103 each coordinate shikimate. NADP(+) is bound by residues 127-131, 151-156, and methionine 220; these read GAGGA and NRTHTK. Position 222 (tyrosine 222) interacts with shikimate. Glycine 244 contacts NADP(+).

The protein belongs to the shikimate dehydrogenase family. In terms of assembly, homodimer.

The enzyme catalyses shikimate + NADP(+) = 3-dehydroshikimate + NADPH + H(+). Its pathway is metabolic intermediate biosynthesis; chorismate biosynthesis; chorismate from D-erythrose 4-phosphate and phosphoenolpyruvate: step 4/7. Involved in the biosynthesis of the chorismate, which leads to the biosynthesis of aromatic amino acids. Catalyzes the reversible NADPH linked reduction of 3-dehydroshikimate (DHSA) to yield shikimate (SA). This chain is Shikimate dehydrogenase (NADP(+)), found in Shewanella baltica (strain OS223).